The chain runs to 214 residues: Pyridoxine/pyridoxamine 5'-phosphate oxidase (214 aa).

Residues 8–11 and lysine 66 contribute to the substrate site; that span reads RINY. FMN-binding positions include 61–66, 76–77, arginine 82, lysine 83, and glutamine 105; these read RIVLIK and FT. The substrate site is built by tyrosine 123, arginine 127, and serine 131. FMN contacts are provided by residues 140 to 141 and tryptophan 184; that span reads QS. 190-192 provides a ligand contact to substrate; it reads RLH. An FMN-binding site is contributed by arginine 194.

It belongs to the pyridoxamine 5'-phosphate oxidase family. In terms of assembly, homodimer. It depends on FMN as a cofactor.

The enzyme catalyses pyridoxamine 5'-phosphate + O2 + H2O = pyridoxal 5'-phosphate + H2O2 + NH4(+). It catalyses the reaction pyridoxine 5'-phosphate + O2 = pyridoxal 5'-phosphate + H2O2. The protein operates within cofactor metabolism; pyridoxal 5'-phosphate salvage; pyridoxal 5'-phosphate from pyridoxamine 5'-phosphate: step 1/1. It functions in the pathway cofactor metabolism; pyridoxal 5'-phosphate salvage; pyridoxal 5'-phosphate from pyridoxine 5'-phosphate: step 1/1. Functionally, catalyzes the oxidation of either pyridoxine 5'-phosphate (PNP) or pyridoxamine 5'-phosphate (PMP) into pyridoxal 5'-phosphate (PLP). This is Pyridoxine/pyridoxamine 5'-phosphate oxidase from Burkholderia ambifaria (strain ATCC BAA-244 / DSM 16087 / CCUG 44356 / LMG 19182 / AMMD) (Burkholderia cepacia (strain AMMD)).